We begin with the raw amino-acid sequence, 331 residues long: Methionyl-tRNA formyltransferase (331 aa).

110–113 is a (6S)-5,6,7,8-tetrahydrofolate binding site; sequence SLLP. Positions 312 to 331 are disordered; that stretch reads HAPAERVSAAGSPAGAGGAP.

Belongs to the Fmt family.

The catalysed reaction is L-methionyl-tRNA(fMet) + (6R)-10-formyltetrahydrofolate = N-formyl-L-methionyl-tRNA(fMet) + (6S)-5,6,7,8-tetrahydrofolate + H(+). Functionally, attaches a formyl group to the free amino group of methionyl-tRNA(fMet). The formyl group appears to play a dual role in the initiator identity of N-formylmethionyl-tRNA by promoting its recognition by IF2 and preventing the misappropriation of this tRNA by the elongation apparatus. The polypeptide is Methionyl-tRNA formyltransferase (Frankia alni (strain DSM 45986 / CECT 9034 / ACN14a)).